The sequence spans 372 residues: Putative glutamate--cysteine ligase 2 (372 aa).

Belongs to the glutamate--cysteine ligase type 2 family. YbdK subfamily. In terms of assembly, homodimer.

It catalyses the reaction L-cysteine + L-glutamate + ATP = gamma-L-glutamyl-L-cysteine + ADP + phosphate + H(+). ATP-dependent carboxylate-amine ligase which exhibits weak glutamate--cysteine ligase activity. The sequence is that of Putative glutamate--cysteine ligase 2 from Citrobacter koseri (strain ATCC BAA-895 / CDC 4225-83 / SGSC4696).